The following is a 284-amino-acid chain: L-ribulose-5-phosphate 3-epimerase UlaE (284 aa).

The protein belongs to the L-ribulose-5-phosphate 3-epimerase family.

The enzyme catalyses L-ribulose 5-phosphate = L-xylulose 5-phosphate. It participates in cofactor degradation; L-ascorbate degradation; D-xylulose 5-phosphate from L-ascorbate: step 3/4. Catalyzes the isomerization of L-xylulose-5-phosphate to L-ribulose-5-phosphate. Is involved in the anaerobic L-ascorbate utilization. This is L-ribulose-5-phosphate 3-epimerase UlaE from Escherichia coli O8 (strain IAI1).